Reading from the N-terminus, the 342-residue chain is Anthranilate phosphoribosyltransferase (342 aa).

Residues Gly79, 82 to 83 (GD), Thr87, 89 to 92 (NVST), 107 to 115 (KHGNRSVSS), and Ser119 each bind 5-phospho-alpha-D-ribose 1-diphosphate. Gly79 lines the anthranilate pocket. Ser91 provides a ligand contact to Mg(2+). An anthranilate-binding site is contributed by Asn110. Arg165 is an anthranilate binding site. Mg(2+)-binding residues include Asp223 and Glu224.

It belongs to the anthranilate phosphoribosyltransferase family. Homodimer. The cofactor is Mg(2+).

The enzyme catalyses N-(5-phospho-beta-D-ribosyl)anthranilate + diphosphate = 5-phospho-alpha-D-ribose 1-diphosphate + anthranilate. It participates in amino-acid biosynthesis; L-tryptophan biosynthesis; L-tryptophan from chorismate: step 2/5. Its function is as follows. Catalyzes the transfer of the phosphoribosyl group of 5-phosphorylribose-1-pyrophosphate (PRPP) to anthranilate to yield N-(5'-phosphoribosyl)-anthranilate (PRA). This chain is Anthranilate phosphoribosyltransferase, found in Aeromonas hydrophila subsp. hydrophila (strain ATCC 7966 / DSM 30187 / BCRC 13018 / CCUG 14551 / JCM 1027 / KCTC 2358 / NCIMB 9240 / NCTC 8049).